A 61-amino-acid polypeptide reads, in one-letter code: Probable tautomerase SERP0934 (61 aa).

P2 (proton acceptor; via imino nitrogen) is an active-site residue.

The protein belongs to the 4-oxalocrotonate tautomerase family.

The chain is Probable tautomerase SERP0934 from Staphylococcus epidermidis (strain ATCC 35984 / DSM 28319 / BCRC 17069 / CCUG 31568 / BM 3577 / RP62A).